Consider the following 250-residue polypeptide: tRNA pseudouridine synthase A (250 aa).

Asp-52 (nucleophile) is an active-site residue. Tyr-111 contacts substrate.

Belongs to the tRNA pseudouridine synthase TruA family. As to quaternary structure, homodimer.

The catalysed reaction is uridine(38/39/40) in tRNA = pseudouridine(38/39/40) in tRNA. Functionally, formation of pseudouridine at positions 38, 39 and 40 in the anticodon stem and loop of transfer RNAs. The chain is tRNA pseudouridine synthase A from Methylorubrum extorquens (strain CM4 / NCIMB 13688) (Methylobacterium extorquens).